A 353-amino-acid polypeptide reads, in one-letter code: Fe(3+) ions import ATP-binding protein FbpC (353 aa).

The region spanning 9 to 239 is the ABC transporter domain; it reads VTFENVTKKF…PASAFIADFM (231 aa). ATP is bound at residue 41–48; it reads GPSGCGKT.

The protein belongs to the ABC transporter superfamily. Fe(3+) ion importer (TC 3.A.1.10) family. In terms of assembly, the complex is composed of two ATP-binding proteins (FbpC), two transmembrane proteins (FbpB) and a solute-binding protein (FbpA).

The protein resides in the cell inner membrane. It catalyses the reaction Fe(3+)(out) + ATP + H2O = Fe(3+)(in) + ADP + phosphate + H(+). In terms of biological role, part of the ABC transporter complex FbpABC involved in Fe(3+) ions import. Responsible for energy coupling to the transport system. The sequence is that of Fe(3+) ions import ATP-binding protein FbpC from Brucella abortus (strain 2308).